Consider the following 177-residue polypeptide: Putative HTH-type transcriptional regulator YvaV (177 aa).

The H-T-H motif DNA-binding region spans 49–73; the sequence is LTELSEATGMSKTRMSQVVREMLDA.

The protein belongs to the GbsR family.

The polypeptide is Putative HTH-type transcriptional regulator YvaV (yvaV) (Bacillus subtilis (strain 168)).